The following is a 338-amino-acid chain: Fructose-1,6-bisphosphatase class 1 (338 aa).

Residues glutamate 94, aspartate 116, leucine 118, and aspartate 119 each coordinate Mg(2+). Residues 119 to 122, asparagine 210, and lysine 276 each bind substrate; that span reads DGSS. Mg(2+) is bound at residue glutamate 282.

The protein belongs to the FBPase class 1 family. In terms of assembly, homotetramer. It depends on Mg(2+) as a cofactor.

It localises to the cytoplasm. It catalyses the reaction beta-D-fructose 1,6-bisphosphate + H2O = beta-D-fructose 6-phosphate + phosphate. It participates in carbohydrate biosynthesis; gluconeogenesis. This Paraburkholderia phytofirmans (strain DSM 17436 / LMG 22146 / PsJN) (Burkholderia phytofirmans) protein is Fructose-1,6-bisphosphatase class 1.